Consider the following 736-residue polypeptide: Replication restart protein PriA (736 aa).

The region spanning 230 to 396 (DFKGNISKEN…KEGRIRTFNF (167 aa)) is the Helicase ATP-binding domain. 243-250 (GPTGSGKT) serves as a coordination point for ATP. Residues 339 to 342 (DEEH) carry the DEAH box motif. Zn(2+)-binding residues include cysteine 452, cysteine 455, cysteine 461, cysteine 464, cysteine 479, cysteine 482, cysteine 492, and cysteine 495. Positions 487-643 (GLVESCPRCG…EELERRKALG (157 aa)) constitute a Helicase C-terminal domain.

This sequence belongs to the helicase family. PriA subfamily. In terms of assembly, component of the replication restart primosome. It depends on Zn(2+) as a cofactor.

The catalysed reaction is Couples ATP hydrolysis with the unwinding of duplex DNA by translocating in the 3'-5' direction.. It catalyses the reaction ATP + H2O = ADP + phosphate + H(+). In terms of biological role, initiates the restart of stalled replication forks, which reloads the replicative helicase on sites other than the origin of replication. Recognizes and binds to abandoned replication forks and remodels them to uncover a helicase loading site. Promotes assembly of the primosome at these replication forks. This is Replication restart protein PriA from Thermotoga maritima (strain ATCC 43589 / DSM 3109 / JCM 10099 / NBRC 100826 / MSB8).